Reading from the N-terminus, the 180-residue chain is Large ribosomal subunit protein uL15 (180 aa).

The interval 1–62 is disordered; sequence MKKERLEQAS…KTAGRGSKGQ (62 aa).

This sequence belongs to the universal ribosomal protein uL15 family. Part of the 50S ribosomal subunit.

Binds to the 23S rRNA. In Leptospira interrogans serogroup Icterohaemorrhagiae serovar copenhageni (strain Fiocruz L1-130), this protein is Large ribosomal subunit protein uL15.